We begin with the raw amino-acid sequence, 609 residues long: Alpha-fetoprotein (609 aa).

Positions M1–S18 are cleaved as a signal peptide. Albumin domains follow at residues R19–T210, K211–Q402, and K403–S601. H22 is a Cu(2+) binding site. A glycan (N-linked (GlcNAc...) asparagine) is linked at N42. Disulfide bonds link C99–C114, C113–C124, C148–C193, C192–C201, C224–C270, C269–C277, C289–C303, and C302–C313. A phosphoserine mark is found at S111, S115, and S117. N251 is a glycosylation site (N-linked (GlcNAc...) asparagine). Residue S344 is modified to Phosphoserine. Disulfide bonds link C384-C393, C416-C462, C461-C472, C485-C501, C500-C511, C538-C583, and C582-C591. A Phosphoserine modification is found at S444.

It belongs to the ALB/AFP/VDB family. In terms of assembly, dimeric and trimeric forms have been found in addition to the monomeric form. In terms of tissue distribution, plasma. Synthesized by the fetal liver and yolk sac.

The protein localises to the secreted. Functionally, binds copper, nickel, and fatty acids as well as, and bilirubin less well than, serum albumin. The sequence is that of Alpha-fetoprotein (AFP) from Pan troglodytes (Chimpanzee).